The following is a 412-amino-acid chain: Poly-beta-1,6-N-acetyl-D-glucosamine synthase (412 aa).

4 consecutive transmembrane segments (helical) span residues 7–28 (LLFY…YFFI), 298–320 (IASI…TANI), 332–354 (IFFF…ALFI), and 364–386 (VGLI…VVIM).

Belongs to the glycosyltransferase 2 family.

It localises to the cell membrane. Functionally, N-acetylglucosaminyltransferase that catalyzes the polymerization of single monomer units of UDP-N-acetylglucosamine to produce the linear homomer poly-beta-1,6-N-acetyl-D-glucosamine (PNAG, also referred to as PIA), a biofilm adhesin polysaccharide. Requires IcaD for full activity. This is Poly-beta-1,6-N-acetyl-D-glucosamine synthase (icaA) from Staphylococcus epidermidis (strain ATCC 35984 / DSM 28319 / BCRC 17069 / CCUG 31568 / BM 3577 / RP62A).